A 291-amino-acid chain; its full sequence is Small ribosomal subunit protein uS2 (291 aa).

The tract at residues 256 to 291 is disordered; it reads STTAPPNWEATGGDWATSTAPAEGWAGDAPAGETKW.

The protein belongs to the universal ribosomal protein uS2 family. Component of the small ribosomal subunit. Mature ribosomes consist of a small (40S) and a large (60S) subunit. The 40S subunit contains about 33 different proteins and 1 molecule of RNA (18S). The 60S subunit contains about 49 different proteins and 3 molecules of RNA (25S, 5.8S and 5S). Interacts with RPS21.

The protein localises to the cytoplasm. Functionally, required for the assembly and/or stability of the 40S ribosomal subunit. Required for the processing of the 20S rRNA-precursor to mature 18S rRNA in a late step of the maturation of 40S ribosomal subunits. The polypeptide is Small ribosomal subunit protein uS2 (Coccidioides immitis (strain RS) (Valley fever fungus)).